A 185-amino-acid chain; its full sequence is Threonylcarbamoyl-AMP synthase (185 aa).

The region spanning 1-185 (MDNFEQVLNA…AKTSQILRQG (185 aa)) is the YrdC-like domain. Residues 163–185 (ETSGRDKPSEIRDAKTSQILRQG) form a disordered region. The span at 164 to 177 (TSGRDKPSEIRDAK) shows a compositional bias: basic and acidic residues.

Belongs to the SUA5 family. TsaC subfamily.

It is found in the cytoplasm. The catalysed reaction is L-threonine + hydrogencarbonate + ATP = L-threonylcarbamoyladenylate + diphosphate + H2O. Functionally, required for the formation of a threonylcarbamoyl group on adenosine at position 37 (t(6)A37) in tRNAs that read codons beginning with adenine. Catalyzes the conversion of L-threonine, HCO(3)(-)/CO(2) and ATP to give threonylcarbamoyl-AMP (TC-AMP) as the acyladenylate intermediate, with the release of diphosphate. In Vibrio parahaemolyticus serotype O3:K6 (strain RIMD 2210633), this protein is Threonylcarbamoyl-AMP synthase.